The following is a 483-amino-acid chain: Dual specificity protein phosphatase CDC14C (483 aa).

The segment at 1–45 (MKRKSEGRSSWAAATCSPCCSLTSPSVKKIRSPTQQDPRHRDPQD) is disordered. The Nucleolar localization signal motif lies at 1–53 (MKRKSEGRSSWAAATCSPCCSLTSPSVKKIRSPTQQDPRHRDPQDDVYLDITD). Low complexity predominate over residues 12–26 (AAATCSPCCSLTSPS). The segment at 43 to 197 (PQDDVYLDIT…AMQYGFLNFN (155 aa)) is a. The interval 198 to 211 (SFNLDEYEHYEKAE) is linker. The b stretch occupies residues 212–378 (NGDLNWIIPD…EGDYFCQKLK (167 aa)). The region spanning 213–373 (GDLNWIIPDR…TSLWLEGDYF (161 aa)) is the Tyrosine-protein phosphatase domain. The Phosphocysteine intermediate role is filled by cysteine 313. A disordered region spans residues 407–426 (QDQQEPEPYSDDDEINGGTQ). Residues 408–421 (DQQEPEPYSDDDEI) show a composition bias toward acidic residues. The chain crosses the membrane as a helical span at residues 444 to 466 (ILLTCPLAVLTSALCSVVIWWIV).

This sequence belongs to the protein-tyrosine phosphatase family. Non-receptor class CDC14 subfamily.

The protein localises to the membrane. Its subcellular location is the nucleus. The protein resides in the nucleolus. It localises to the cytoplasm. It is found in the cytoskeleton. It catalyses the reaction O-phospho-L-tyrosyl-[protein] + H2O = L-tyrosyl-[protein] + phosphate. The catalysed reaction is O-phospho-L-seryl-[protein] + H2O = L-seryl-[protein] + phosphate. It carries out the reaction O-phospho-L-threonyl-[protein] + H2O = L-threonyl-[protein] + phosphate. Functionally, dual-specificity phosphatase. Preferentially dephosphorylates proteins modified by proline-directed kinases. This is Dual specificity protein phosphatase CDC14C from Symphalangus syndactylus (Siamang).